The chain runs to 336 residues: Dihydroorotate dehydrogenase (quinone) (336 aa).

Residues 62–66 (AGLDK) and Thr-86 contribute to the FMN site. Lys-66 provides a ligand contact to substrate. A substrate-binding site is contributed by 111–115 (NRMGF). FMN-binding residues include Asn-139 and Asn-172. Substrate is bound at residue Asn-172. Catalysis depends on Ser-175, which acts as the Nucleophile. Substrate is bound at residue Asn-177. FMN contacts are provided by Lys-217 and Thr-245. Residue 246 to 247 (NT) coordinates substrate. FMN-binding positions include Gly-268, Gly-297, and 318–319 (YS).

The protein belongs to the dihydroorotate dehydrogenase family. Type 2 subfamily. In terms of assembly, monomer. FMN is required as a cofactor.

Its subcellular location is the cell membrane. It carries out the reaction (S)-dihydroorotate + a quinone = orotate + a quinol. Its pathway is pyrimidine metabolism; UMP biosynthesis via de novo pathway; orotate from (S)-dihydroorotate (quinone route): step 1/1. Its function is as follows. Catalyzes the conversion of dihydroorotate to orotate with quinone as electron acceptor. This chain is Dihydroorotate dehydrogenase (quinone), found in Aeromonas salmonicida (strain A449).